A 438-amino-acid chain; its full sequence is Coiled-coil domain-containing protein 78 (438 aa).

2 coiled-coil regions span residues 74-105 and 217-246; these read HLHE…LRGD and SCQG…YVLR. Residues 345–381 are disordered; that stretch reads FSHREDQHGGPGALLSSPKKRPGGASQGGTSEPQGLD.

The protein belongs to the CCDC78 family. Expressed primarily in skeletal muscle.

It localises to the cytoplasm. The protein localises to the cytoskeleton. It is found in the microtubule organizing center. The protein resides in the centrosome. Its subcellular location is the centriole. It localises to the perinuclear region. The protein localises to the cell membrane. It is found in the sarcolemma. The protein resides in the sarcoplasmic reticulum. Its function is as follows. Component of the deuterosome, a structure that promotes de novo centriole amplification in multiciliated cells that can generate more than 100 centrioles. Deuterosome-mediated centriole amplification occurs in terminally differentiated multiciliated cells (G1/0) and not in S phase. Essential for centriole amplification and is required for CEP152 localization to the deuterosome. In Homo sapiens (Human), this protein is Coiled-coil domain-containing protein 78 (CCDC78).